The primary structure comprises 890 residues: DNA mismatch repair protein MutS (890 aa).

Residue 607 to 614 coordinates ATP; sequence GPNMSGKS.

The protein belongs to the DNA mismatch repair MutS family.

This protein is involved in the repair of mismatches in DNA. It is possible that it carries out the mismatch recognition step. This protein has a weak ATPase activity. The sequence is that of DNA mismatch repair protein MutS from Bacillus thuringiensis subsp. konkukian (strain 97-27).